The following is a 138-amino-acid chain: Acidic phospholipase A2 ammodytin I1 (138 aa).

A signal peptide spans M1 to G16. Disulfide bonds link C42–C131, C44–C60, C59–C111, C65–C138, C66–C104, C73–C97, and C91–C102. Ca(2+)-binding residues include Y43, G45, and G47. H63 is a catalytic residue. A Ca(2+)-binding site is contributed by D64. D105 is a catalytic residue.

The protein belongs to the phospholipase A2 family. Group II subfamily. D49 sub-subfamily. Ca(2+) is required as a cofactor. As to expression, expressed by the venom gland.

It localises to the secreted. It carries out the reaction a 1,2-diacyl-sn-glycero-3-phosphocholine + H2O = a 1-acyl-sn-glycero-3-phosphocholine + a fatty acid + H(+). Its function is as follows. Snake venom phospholipase A2 (PLA2) that has enzymatic activity but is non-toxic. PLA2 catalyzes the calcium-dependent hydrolysis of the 2-acyl groups in 3-sn-phosphoglycerides. The chain is Acidic phospholipase A2 ammodytin I1 from Vipera ammodytes ammodytes (Western sand viper).